We begin with the raw amino-acid sequence, 396 residues long: Seminal vesicle major clotting proteins (396 aa).

A signal peptide spans 1–21; it reads MKSTIFFILSLLLMLENQAAG. A disordered region spans residues 45–178; it reads MEEAVSGSGL…ASSVDHRKKG (134 aa). Basic and acidic residues predominate over residues 60–152; that stretch reads RGSDREESVG…RVSVRHERVE (93 aa). SVP-3/-4 repeat repeat units follow at residues 65 to 88, 89 to 112, and 113 to 136; these read EESVGERVSLRQEEFEKGHIRSSV, EEPEGEHVSVRREHLEKSHIRHNV, and EEPEGERVSVRREHLEKSHIRHSA. The stretch at 137–157 is one SVP-3/-4 repeat; truncated repeat; sequence EEPEGERVSVRHERVEKTHKR. Positions 177-192 are excised as a propeptide; it reads KGHIRFKRQDPIAALA. 8 SVP-1 clotting repeats span residues 194-217, 218-241, 242-265, 266-289, 290-313, 314-337, 338-361, and 362-385; these read IEGQDAVKDSLWVKGQASSEERFS, VKGQDLVKGHLQMKGQSSLAERFS, VTGQDSVKGRLQMKGQDTLAERFS, MTGQDSVKSRLQMKGQDSLSERFS, MTGQDSVKGRLQMKGQSSLAERFS, VTGQDSVKGRLQMKGKDTLAERFS, VTGQDSVKGRLQMKGHDLLEERFS, and VSGQDSVKGLARIKGQESVQSGFS. Residues 194–396 form a 9 X tandem repeats of SVP-1 like motif region; it reads IEGQDAVKDS…KGQGSLKGLI (203 aa). Residues 377–396 are disordered; that stretch reads QESVQSGFSVKGQGSLKGLI. An SVP-1 clotting 9; truncated repeat occupies 386–396; the sequence is VKGQGSLKGLI.

To the SVP-2 precursor, particularly in regions where protein processing must occur. SVP-3 may be a post-translationally modified form of SVP-4. In terms of processing, covalent clotting of SVP-1 is catalyzed by a transglutaminase secreted by the anterior prostate through the formation of gamma-glutamyl-epsilon-lysine cross-links. The conserved 2 Lys and 1 Gln residues per functional unit seem to be the residues involved in the formation of those cross-links.

It is found in the secreted. Its function is as follows. SVP-1 serves as substrate in the formation of the copulatory plug. SVP-3 and SVP-4 may also contribute to the clot. This is Seminal vesicle major clotting proteins from Cavia porcellus (Guinea pig).